Here is a 313-residue protein sequence, read N- to C-terminus: Probable 5-dehydro-4-deoxyglucarate dehydratase 1 (313 aa).

Belongs to the DapA family.

It catalyses the reaction 5-dehydro-4-deoxy-D-glucarate + H(+) = 2,5-dioxopentanoate + CO2 + H2O. It functions in the pathway carbohydrate acid metabolism; D-glucarate degradation; 2,5-dioxopentanoate from D-glucarate: step 2/2. The polypeptide is Probable 5-dehydro-4-deoxyglucarate dehydratase 1 (Streptomyces avermitilis (strain ATCC 31267 / DSM 46492 / JCM 5070 / NBRC 14893 / NCIMB 12804 / NRRL 8165 / MA-4680)).